Here is an 80-residue protein sequence, read N- to C-terminus: Phycocyanin-645 alpha-1 chain (80 aa).

(2R,3E)-phycocyanobilin is bound at residue Arg-16. Mesobiliverdin is bound by residues Cys-18, Gln-24, Tyr-25, and Lys-40. 15,16-dihydrobiliverdin contacts are provided by Pro-71 and Ile-73.

Belongs to the phycoerythrin family. As to quaternary structure, heterotetramer of 2 different alpha chains and 2 identical beta chains which form 2 alpha-beta heterodimers within the heterotetramer. Post-translationally, contains one phycocyanobilin chromophore, one mesobiliverdin chromophore and one 15,16-dihydrobiliverdin chromophore with binding mediated by both the alpha and beta subunits.

It is found in the plastid. The protein localises to the chloroplast thylakoid membrane. Its function is as follows. Light-harvesting photosynthetic tetrapyrrole chromophore-protein from the phycobiliprotein complex. The protein is Phycocyanin-645 alpha-1 chain of Chroomonas sp.